We begin with the raw amino-acid sequence, 205 residues long: Thiamine-phosphate synthase (205 aa).

4-amino-2-methyl-5-(diphosphooxymethyl)pyrimidine-binding positions include 34–38 (QLRCK) and asparagine 66. Residues aspartate 67 and aspartate 86 each contribute to the Mg(2+) site. A 4-amino-2-methyl-5-(diphosphooxymethyl)pyrimidine-binding site is contributed by serine 105. Residue 131 to 133 (TTT) coordinates 2-[(2R,5Z)-2-carboxy-4-methylthiazol-5(2H)-ylidene]ethyl phosphate. Lysine 134 provides a ligand contact to 4-amino-2-methyl-5-(diphosphooxymethyl)pyrimidine. Glycine 163 contacts 2-[(2R,5Z)-2-carboxy-4-methylthiazol-5(2H)-ylidene]ethyl phosphate.

The protein belongs to the thiamine-phosphate synthase family. Requires Mg(2+) as cofactor.

The enzyme catalyses 2-[(2R,5Z)-2-carboxy-4-methylthiazol-5(2H)-ylidene]ethyl phosphate + 4-amino-2-methyl-5-(diphosphooxymethyl)pyrimidine + 2 H(+) = thiamine phosphate + CO2 + diphosphate. The catalysed reaction is 2-(2-carboxy-4-methylthiazol-5-yl)ethyl phosphate + 4-amino-2-methyl-5-(diphosphooxymethyl)pyrimidine + 2 H(+) = thiamine phosphate + CO2 + diphosphate. It catalyses the reaction 4-methyl-5-(2-phosphooxyethyl)-thiazole + 4-amino-2-methyl-5-(diphosphooxymethyl)pyrimidine + H(+) = thiamine phosphate + diphosphate. It functions in the pathway cofactor biosynthesis; thiamine diphosphate biosynthesis; thiamine phosphate from 4-amino-2-methyl-5-diphosphomethylpyrimidine and 4-methyl-5-(2-phosphoethyl)-thiazole: step 1/1. In terms of biological role, condenses 4-methyl-5-(beta-hydroxyethyl)thiazole monophosphate (THZ-P) and 2-methyl-4-amino-5-hydroxymethyl pyrimidine pyrophosphate (HMP-PP) to form thiamine monophosphate (TMP). This chain is Thiamine-phosphate synthase, found in Neisseria gonorrhoeae (strain ATCC 700825 / FA 1090).